Reading from the N-terminus, the 155-residue chain is DNA-directed RNA polymerase II subunit rpb4 (155 aa).

It belongs to the eukaryotic RPB4 RNA polymerase subunit family. In terms of assembly, component of the RNA polymerase II (Pol II) complex consisting of 12 subunits. RPB4 and RPB7 form a subcomplex that protrudes from the 10-subunit Pol II core complex.

The protein resides in the nucleus. Its function is as follows. DNA-dependent RNA polymerase catalyzes the transcription of DNA into RNA using the four ribonucleoside triphosphates as substrates. Component of RNA polymerase II which synthesizes mRNA precursors and many functional non-coding RNAs. Pol II is the central component of the basal RNA polymerase II transcription machinery. It is composed of mobile elements that move relative to each other. RPB4 is part of a subcomplex with RPB7 that binds to a pocket formed by RPB1, RPB2 and RPB6 at the base of the clamp element. The RPB4-RPB7 subcomplex seems to lock the clamp via RPB7 in the closed conformation thus preventing double-stranded DNA to enter the active site cleft. The RPB4-RPB7 subcomplex binds single-stranded DNA and RNA. The sequence is that of DNA-directed RNA polymerase II subunit rpb4 (polr2d) from Dictyostelium discoideum (Social amoeba).